The following is a 216-amino-acid chain: UPF0502 protein Smal_0052 (216 aa).

The protein belongs to the UPF0502 family.

In Stenotrophomonas maltophilia (strain R551-3), this protein is UPF0502 protein Smal_0052.